A 126-amino-acid polypeptide reads, in one-letter code: UPF0212 protein TON_0350 (126 aa).

Belongs to the UPF0212 family.

In Thermococcus onnurineus (strain NA1), this protein is UPF0212 protein TON_0350.